The primary structure comprises 231 residues: MAKLAKRIQKIREGVDPTKLVALSDAISMVKERAVAKFDETIEIAMNLGVDPRHADQMVRGVVNLPNGTGRDVRVAVFARGAKADEARAAGAEVVGAEDLVEIVQGGKIDFDRCIATPDMMPLVGRLGKVLGPRGMMPNPKVGTVTMDVAGAVKASKGGAVEFRVEKAGIIHAGIGKASFEAKALEENIKAFADAVIKAKPAGAKGNYVKRVAISSTMGPGVKIDPSSVTA.

This sequence belongs to the universal ribosomal protein uL1 family. In terms of assembly, part of the 50S ribosomal subunit.

Its function is as follows. Binds directly to 23S rRNA. The L1 stalk is quite mobile in the ribosome, and is involved in E site tRNA release. Protein L1 is also a translational repressor protein, it controls the translation of the L11 operon by binding to its mRNA. This Allorhizobium ampelinum (strain ATCC BAA-846 / DSM 112012 / S4) (Agrobacterium vitis (strain S4)) protein is Large ribosomal subunit protein uL1.